Reading from the N-terminus, the 247-residue chain is Cell division protein ZapD (247 aa).

This sequence belongs to the ZapD family. As to quaternary structure, interacts with FtsZ.

It is found in the cytoplasm. Its function is as follows. Cell division factor that enhances FtsZ-ring assembly. Directly interacts with FtsZ and promotes bundling of FtsZ protofilaments, with a reduction in FtsZ GTPase activity. This Escherichia fergusonii (strain ATCC 35469 / DSM 13698 / CCUG 18766 / IAM 14443 / JCM 21226 / LMG 7866 / NBRC 102419 / NCTC 12128 / CDC 0568-73) protein is Cell division protein ZapD.